The primary structure comprises 96 residues: Putative pterin-4-alpha-carbinolamine dehydratase (96 aa).

Belongs to the pterin-4-alpha-carbinolamine dehydratase family.

It carries out the reaction (4aS,6R)-4a-hydroxy-L-erythro-5,6,7,8-tetrahydrobiopterin = (6R)-L-erythro-6,7-dihydrobiopterin + H2O. This is Putative pterin-4-alpha-carbinolamine dehydratase from Prochlorococcus marinus (strain MIT 9313).